We begin with the raw amino-acid sequence, 331 residues long: Beta-ketoacyl-[acyl-carrier-protein] synthase III (331 aa).

Residues cysteine 113 and histidine 253 contribute to the active site. The tract at residues 254-258 is ACP-binding; sequence QANTR. The active site involves asparagine 283.

The protein belongs to the thiolase-like superfamily. FabH family. In terms of assembly, homodimer.

Its subcellular location is the cytoplasm. It carries out the reaction malonyl-[ACP] + acetyl-CoA + H(+) = 3-oxobutanoyl-[ACP] + CO2 + CoA. Its pathway is lipid metabolism; fatty acid biosynthesis. Its function is as follows. Catalyzes the condensation reaction of fatty acid synthesis by the addition to an acyl acceptor of two carbons from malonyl-ACP. Catalyzes the first condensation reaction which initiates fatty acid synthesis and may therefore play a role in governing the total rate of fatty acid production. Possesses both acetoacetyl-ACP synthase and acetyl transacylase activities. Its substrate specificity determines the biosynthesis of branched-chain and/or straight-chain of fatty acids. The protein is Beta-ketoacyl-[acyl-carrier-protein] synthase III of Desulfitobacterium hafniense (strain DSM 10664 / DCB-2).